The following is a 65-amino-acid chain: Small ribosomal subunit protein eS31 (65 aa).

Zn(2+) is bound by residues Cys36, Cys39, Cys55, and Cys58. The segment at Cys36 to Cys58 adopts a C4-type zinc-finger fold.

The protein belongs to the eukaryotic ribosomal protein eS31 family. As to quaternary structure, part of the 30S ribosomal subunit. It depends on Zn(2+) as a cofactor.

The polypeptide is Small ribosomal subunit protein eS31 (Pyrobaculum aerophilum (strain ATCC 51768 / DSM 7523 / JCM 9630 / CIP 104966 / NBRC 100827 / IM2)).